The following is a 247-amino-acid chain: Ribosomal RNA large subunit methyltransferase E (247 aa).

Positions M1–A21 are disordered. Residues S8–P17 show a composition bias toward basic and acidic residues. 5 residues coordinate S-adenosyl-L-methionine: G80, W82, D108, D124, and D153. The active-site Proton acceptor is the K193.

This sequence belongs to the class I-like SAM-binding methyltransferase superfamily. RNA methyltransferase RlmE family.

The protein localises to the cytoplasm. It carries out the reaction uridine(2552) in 23S rRNA + S-adenosyl-L-methionine = 2'-O-methyluridine(2552) in 23S rRNA + S-adenosyl-L-homocysteine + H(+). Specifically methylates the uridine in position 2552 of 23S rRNA at the 2'-O position of the ribose in the fully assembled 50S ribosomal subunit. The polypeptide is Ribosomal RNA large subunit methyltransferase E (Polaromonas sp. (strain JS666 / ATCC BAA-500)).